We begin with the raw amino-acid sequence, 260 residues long: Adenosylcobinamide-GDP ribazoletransferase (260 aa).

The next 6 helical transmembrane spans lie at A40–L60, T64–L84, Y117–I137, P142–W162, H188–L208, and P210–R230.

It belongs to the CobS family. It depends on Mg(2+) as a cofactor.

It is found in the cell inner membrane. It carries out the reaction alpha-ribazole + adenosylcob(III)inamide-GDP = adenosylcob(III)alamin + GMP + H(+). The enzyme catalyses alpha-ribazole 5'-phosphate + adenosylcob(III)inamide-GDP = adenosylcob(III)alamin 5'-phosphate + GMP + H(+). It participates in cofactor biosynthesis; adenosylcobalamin biosynthesis; adenosylcobalamin from cob(II)yrinate a,c-diamide: step 7/7. In terms of biological role, joins adenosylcobinamide-GDP and alpha-ribazole to generate adenosylcobalamin (Ado-cobalamin). Also synthesizes adenosylcobalamin 5'-phosphate from adenosylcobinamide-GDP and alpha-ribazole 5'-phosphate. The polypeptide is Adenosylcobinamide-GDP ribazoletransferase (Rhizobium etli (strain ATCC 51251 / DSM 11541 / JCM 21823 / NBRC 15573 / CFN 42)).